The sequence spans 99 residues: Aspartyl/glutamyl-tRNA(Asn/Gln) amidotransferase subunit C (99 aa).

Belongs to the GatC family. As to quaternary structure, heterotrimer of A, B and C subunits.

The enzyme catalyses L-glutamyl-tRNA(Gln) + L-glutamine + ATP + H2O = L-glutaminyl-tRNA(Gln) + L-glutamate + ADP + phosphate + H(+). It catalyses the reaction L-aspartyl-tRNA(Asn) + L-glutamine + ATP + H2O = L-asparaginyl-tRNA(Asn) + L-glutamate + ADP + phosphate + 2 H(+). Functionally, allows the formation of correctly charged Asn-tRNA(Asn) or Gln-tRNA(Gln) through the transamidation of misacylated Asp-tRNA(Asn) or Glu-tRNA(Gln) in organisms which lack either or both of asparaginyl-tRNA or glutaminyl-tRNA synthetases. The reaction takes place in the presence of glutamine and ATP through an activated phospho-Asp-tRNA(Asn) or phospho-Glu-tRNA(Gln). This Methylibium petroleiphilum (strain ATCC BAA-1232 / LMG 22953 / PM1) protein is Aspartyl/glutamyl-tRNA(Asn/Gln) amidotransferase subunit C.